Consider the following 319-residue polypeptide: Free fatty acid receptor 3 (319 aa).

Residues 1–15 (MDTSFFPGNHWLFFS) are Extracellular-facing. A helical transmembrane segment spans residues 16–36 (VDLLVFLVGLPLNVMALVVFV). The Cytoplasmic segment spans residues 37 to 43 (NKLRRRP). The helical transmembrane segment at 44–64 (VAVDLLLLNLTISDLLLLLFL) threads the bilayer. Residues 65–98 (PFRIVEAACGMKWILPFIFCPLSGFLFFTTIYLT) are Extracellular-facing. Cysteine 84 and cysteine 165 are joined by a disulfide. Residues 99 to 119 (SLFLMTVSIERFLSVAYPLWY) form a helical membrane-spanning segment. Residues 120–127 (KTRPRLAQ) lie on the Cytoplasmic side of the membrane. Residues 128-148 (AGLVSGICWFLASAHCSVIYV) form a helical membrane-spanning segment. Over 149–183 (TEYWGNATYSQGTNGTCYLEFREDQLAILLPVRLE) the chain is Extracellular. A helical transmembrane segment spans residues 184-206 (MAVVLFMVPLCITSYCYSRLVWI). Residues 207-218 (LSQGASRRRRKR) lie on the Cytoplasmic side of the membrane. The helical transmembrane segment at 219–239 (VMGLLVATLLIFFVCFGPYNM) threads the bilayer. Residues 240–254 (SHVVGYVRGESPTWR) lie on the Extracellular side of the membrane. A helical transmembrane segment spans residues 255 to 275 (SYVLLLSTLNSCIDPLVFYFS). The Cytoplasmic portion of the chain corresponds to 276 to 319 (SSKFQADFHQLLSRLIRACVPWTQEVSLELKVKNGEEPSKECPS).

Belongs to the G-protein coupled receptor 1 family. In terms of tissue distribution, expressed in the sympathetic nervous system.

The protein localises to the cell membrane. Its function is as follows. G protein-coupled receptor that is activated by a major product of dietary fiber digestion, the short chain fatty acids (SCFAs), and that plays a role in the regulation of whole-body energy homeostasis and in intestinal immunity. In omnivorous mammals, the short chain fatty acids acetate, propionate and butyrate are produced primarily by the gut microbiome that metabolizes dietary fibers. SCFAs serve as a source of energy but also act as signaling molecules. That G protein-coupled receptor is probably coupled to the pertussis toxin-sensitive, G(i/o)-alpha family of G proteins. Its activation results in the formation of inositol 1,4,5-trisphosphate, the mobilization of intracellular calcium, the phosphorylation of the MAPK3/ERK1 and MAPK1/ERK2 kinases and the inhibition of intracellular cAMP accumulation. Activated by SCFAs and by beta-hydroxybutyrate, a ketone body produced by the liver upon starvation, it inhibits N-type calcium channels and modulates the activity of sympathetic neurons through a signaling cascade involving the beta and gamma subunits of its coupled G protein, phospholipase C and MAP kinases. Thereby, it may regulate energy expenditure through the control of the sympathetic nervous system that controls for instance heart rate. Upon activation by SCFAs accumulating in the intestine, it may also signal to the brain via neural circuits which in turn would regulate intestinal gluconeogenesis. May also control the production of hormones involved in whole-body energy homeostasis. May for instance, regulate blood pressure through renin secretion. May also regulate secretion of the PYY peptide by enteroendocrine cells and control gut motility, intestinal transit rate, and the harvesting of energy from SCFAs produced by gut microbiota. May also indirectly regulate the production of LEP/Leptin, a hormone acting on the CNS to inhibit food intake, in response to the presence of short-chain fatty acids in the intestine. Finally, may also play a role in glucose homeostasis. Besides its role in energy homeostasis, may play a role in intestinal immunity. May mediate the activation of the inflammatory and immune response by SCFAs in the gut, regulating the rapid production of chemokines and cytokines by intestinal epithelial cells. The chain is Free fatty acid receptor 3 (Ffar3) from Rattus norvegicus (Rat).